The sequence spans 173 residues: Shikimate kinase (173 aa).

11–16 (GAGKTT) lines the ATP pocket. Position 15 (Thr-15) interacts with Mg(2+). Asp-33, Arg-57, and Gly-79 together coordinate substrate. Residue Arg-118 participates in ATP binding. Arg-140 contributes to the substrate binding site.

Belongs to the shikimate kinase family. In terms of assembly, monomer. The cofactor is Mg(2+).

The protein localises to the cytoplasm. The catalysed reaction is shikimate + ATP = 3-phosphoshikimate + ADP + H(+). Its pathway is metabolic intermediate biosynthesis; chorismate biosynthesis; chorismate from D-erythrose 4-phosphate and phosphoenolpyruvate: step 5/7. Catalyzes the specific phosphorylation of the 3-hydroxyl group of shikimic acid using ATP as a cosubstrate. The polypeptide is Shikimate kinase (Parabacteroides distasonis (strain ATCC 8503 / DSM 20701 / CIP 104284 / JCM 5825 / NCTC 11152)).